We begin with the raw amino-acid sequence, 1165 residues long: Serine/threonine-protein kinase/endoribonuclease ireA (1165 aa).

The N-terminal stretch at 1 to 27 is a signal peptide; it reads MRWRLPGARTTLPASVALLLLPILVAP. The Lumenal portion of the chain corresponds to 28–504; that stretch reads QQLQEHDDLP…STIIRKGWDN (477 aa). Asn-152 is a glycosylation site (N-linked (GlcNAc...) asparagine). Residues 505 to 525 traverse the membrane as a helical segment; that stretch reads AVDIFVTILLLFFGAFIYFNS. Over 526-1165 the chain is Cytoplasmic; sequence HNIQELAKQK…RFKRYFTPVE (640 aa). Residues 547–668 form a disordered region; that stretch reads QPPLSTPSTP…SEGESKDQAD (122 aa). 2 stretches are compositionally biased toward basic and acidic residues: residues 591–600 and 611–620; these read ATPKPKRDRS and KIREPSRGPD. Residues 637–655 are compositionally biased toward basic residues; the sequence is PKKKARRGRRGGKNHRRGK. Residues 656–668 show a composition bias toward basic and acidic residues; the sequence is KPDSEGESKDQAD. Positions 711–1026 constitute a Protein kinase domain; that stretch reads VFSDVVLGHG…ASAVLMHPFF (316 aa). ATP-binding positions include 717–725 and Lys-739; that span reads LGHGSHGTV. Asp-832 serves as the catalytic Proton acceptor. Residues 899–919 are disordered; sequence AIQGGESQHTESSEPAVVDPQ. Residues 1029–1163 enclose the KEN domain; that stretch reads PSDRLSFLCD…IDRFKRYFTP (135 aa).

This sequence belongs to the protein kinase superfamily. Ser/Thr protein kinase family. Homodimer; in response to the accumulation of unfolded proteins. It depends on Mg(2+) as a cofactor. Autophosphorylated mainly on serine residues.

Its subcellular location is the membrane. It catalyses the reaction L-seryl-[protein] + ATP = O-phospho-L-seryl-[protein] + ADP + H(+). It carries out the reaction L-threonyl-[protein] + ATP = O-phospho-L-threonyl-[protein] + ADP + H(+). 8-formyl-7-hydroxy-4-methylcoumarin inhibits the endonuclease activity and prebvent the splicing if the hacA mRNA. The kinase domain is activated by trans-autophosphorylation. Kinase activity is required for activation of the endoribonuclease domain. In terms of biological role, senses unfolded proteins in the lumen of the endoplasmic reticulum (ER) via its N-terminal domain which leads to enzyme auto-activation. The active endoribonuclease domain responds by cleaving an intron from the downstream cytoplasmic mRNA hacA, allowing for the translation of a transcription factor that coordinates a series of adaptive responses that are collectively known as the unfolded protein response (UPR). In the absence of ER stress, ireA controls dual signaling circuits that are both hacA-dependent and hacA-independent and which contribute to the expression of traits that are essential for virulence. The polypeptide is Serine/threonine-protein kinase/endoribonuclease ireA (Aspergillus fumigatus (strain ATCC MYA-4609 / CBS 101355 / FGSC A1100 / Af293) (Neosartorya fumigata)).